Here is a 44-residue protein sequence, read N- to C-terminus: Pandinin-1 (44 aa).

In terms of tissue distribution, expressed by the venom gland.

The protein localises to the secreted. It is found in the target cell membrane. Its function is as follows. Disrupts cell membranes through formation of pores. Strong antimicrobial activity against Gram-positive bacteria B.subtilis, S.epidermidis, E.faecalis and S.aureus. Less active against Gram-negative bacteria P.aeruginosa and E.coli. Has no antifungal or hemolytic activity. In Pandinus imperator (Emperor scorpion), this protein is Pandinin-1.